The primary structure comprises 164 residues: Cytochrome c-type biogenesis protein CcmE (164 aa).

The Cytoplasmic segment spans residues 1–7; it reads MTRKQRR. Residues 8–28 traverse the membrane as a helical; Signal-anchor for type II membrane protein segment; that stretch reads LLMIGGAGVVLVVAVGLVLNA. Residues 29 to 164 are Periplasmic-facing; sequence MRGSIVFFST…ASADAAGPSR (136 aa). 2 residues coordinate heme: histidine 122 and tyrosine 126. Residues 137–149 show a composition bias toward basic and acidic residues; the sequence is KQGHWKDDYEKKP. Residues 137 to 164 are disordered; the sequence is KQGHWKDDYEKKPPGAPGASADAAGPSR. Over residues 153–164 the composition is skewed to low complexity; the sequence is PGASADAAGPSR.

It belongs to the CcmE/CycJ family.

Its subcellular location is the cell inner membrane. In terms of biological role, heme chaperone required for the biogenesis of c-type cytochromes. Transiently binds heme delivered by CcmC and transfers the heme to apo-cytochromes in a process facilitated by CcmF and CcmH. The protein is Cytochrome c-type biogenesis protein CcmE of Rhodopseudomonas palustris (strain BisB5).